Here is a 345-residue protein sequence, read N- to C-terminus: MEELKVEMEEETVTFTGSVAASSSVGSSSSPRPMEGLNETGPPPFLTKTYEMVEDPATDTVVSWSNGRNSFVVWDSHKFSTTLLPRYFKHSNFSSFIRQLNTYGFRKIDPDRWEFANEGFLAGQKHLLKNIKRRRNMGLQNVNQQGSGMSCVEVGQYGFDGEVERLKRDHGVLVAEVVRLRQQQHSSKSQVAAMEQRLLVTEKRQQQMMTFLAKALNNPNFVQQFAVMSKEKKSLFGLDVGRKRRLTSTPSLGTMEENLLHDQEFDRMKDDMEMLFAAAIDDEANNSMPTKEEQCLEAMNVMMRDGNLEAALDVKVEDLVGSPLDWDSQDLHDMVDQMGFLGSEP.

Residues 17–30 (GSVAASSSVGSSSS) are compositionally biased toward low complexity. Residues 17–40 (GSVAASSSVGSSSSPRPMEGLNET) form a disordered region. A DNA-binding region spans residues 42–136 (PPPFLTKTYE…LLKNIKRRRN (95 aa)). The segment at 150–216 (SCVEVGQYGF…QMMTFLAKAL (67 aa)) is hydrophobic repeat HR-A/B. The Nuclear localization signal signature appears at 231–238 (EKKSLFGL). An AHA1 motif is present at residues 273 to 282 (EMLFAAAIDD). Lys-315 is covalently cross-linked (Glycyl lysine isopeptide (Lys-Gly) (interchain with G-Cter in SUMO)). The AHA2 signature appears at 324-333 (LDWDSQDLHD). The short motif at 334–341 (MVDQMGFL) is the Nuclear export signal element.

The protein belongs to the HSF family. Class A subfamily. As to quaternary structure, homotrimer. Interacts with SUMO1. Binds to HSBP. Exhibits temperature-dependent phosphorylation. In terms of processing, sumoylated at Lys-315. Sumoylation represses its function.

It is found in the cytoplasm. It localises to the nucleus. Functionally, transcriptional activator that specifically binds DNA sequence 5'-AGAAnnTTCT-3' known as heat shock promoter elements (HSE). Seems to be involved in other environmental stress responses. Activates ascorbate peroxidase 2 (APX2) in addition to several heat shock protein (HSPs). Binds to the promoter of SGIP1 and activates its expression in heat acclimated plants. Involved in the mechanisms necessary for quick response to heat and subsequent heritable transgenerational memory of heat acclimation (global warming) such as early flowering and attenuated immunity; this process includes epigenetic regulation as well as post-transcriptional gene silencing (PTGS). In response to heat, HSFA2 is activated and promotes the expression of REF6 which in turn derepresses HSFA2, thus establishing an inheritable feedback loop able to trigger SGIP1 and subsequent SGIP1-mediated SGS3 degradation; this prevents the biosynthesis of trans-acting siRNA (tasiRNA) and leads to the release of HTT5, which drives early flowering but attenuates immunity. The chain is Heat stress transcription factor A-2 from Arabidopsis thaliana (Mouse-ear cress).